Here is a 161-residue protein sequence, read N- to C-terminus: Cyclic pyranopterin monophosphate synthase (161 aa).

Residues 73-75 and 110-111 each bind substrate; these read LCH and ME. Aspartate 125 is a catalytic residue.

The protein belongs to the MoaC family. In terms of assembly, homohexamer; trimer of dimers.

The catalysed reaction is (8S)-3',8-cyclo-7,8-dihydroguanosine 5'-triphosphate = cyclic pyranopterin phosphate + diphosphate. It participates in cofactor biosynthesis; molybdopterin biosynthesis. Its function is as follows. Catalyzes the conversion of (8S)-3',8-cyclo-7,8-dihydroguanosine 5'-triphosphate to cyclic pyranopterin monophosphate (cPMP). The sequence is that of Cyclic pyranopterin monophosphate synthase from Pseudomonas savastanoi pv. phaseolicola (strain 1448A / Race 6) (Pseudomonas syringae pv. phaseolicola (strain 1448A / Race 6)).